Reading from the N-terminus, the 396-residue chain is MRFIDQLDIAGKKLLMRVDFNVPLDGETITDDNRIKAAVPTFKYALEKGASVIVMAHLGKPKGKRVDSLSLAPAAKRLGEYLGMEVPLAPDCIGSEVEKMAAELKPGQVMMLENLRFHAEEQAKTPEERGDFGKQLAALADIYVNDAFGVAHRANASVVDVPYAAKECCAGFLLKLEWEYLGEALKNARKPYIAVSGGAKVSSKLGILNNLIGKVDDFIIGGAMANTFLLAQGKAVGKSLVEESLVDTAKEIMDKAASSGTTLHLPTDFIWGKDIETAQGVCDGDSVPEDGMLLDIGPESAKKFCEVIERSKTIVWNGPMGLFEKEPFAQGSLKVCEVMANLDDATTIVGGGDTDAVVHQAKLEDKFTFISTGGGSFLEFLEGKELPAFKALKENS.

Substrate-binding positions include 19 to 21 (DFN), arginine 34, 57 to 60 (HLGK), arginine 116, and arginine 153. Residues lysine 204, glutamate 324, and 351–354 (GGDT) each bind ATP.

It belongs to the phosphoglycerate kinase family. Monomer.

It is found in the cytoplasm. It catalyses the reaction (2R)-3-phosphoglycerate + ATP = (2R)-3-phospho-glyceroyl phosphate + ADP. It functions in the pathway carbohydrate degradation; glycolysis; pyruvate from D-glyceraldehyde 3-phosphate: step 2/5. The sequence is that of Phosphoglycerate kinase from Maridesulfovibrio salexigens (strain ATCC 14822 / DSM 2638 / NCIMB 8403 / VKM B-1763) (Desulfovibrio salexigens).